Here is a 653-residue protein sequence, read N- to C-terminus: MELDLSVLGRSFIVTRRNSSITRPCIQSSNFSVRVLQRNKHRPLCFSTNPSNSSFIRFQKGCDFSHRCQFVVLSATGDHVGISQKHSDSTEKVDSIRILLKRGIVLGAVVCGVLFYGCGKVLASTSVVDVAFSKSILLLKNAWPKTSQVLKVLREQGLILAVLLGLSAFFSMAETSITTLWPWKVRELAEKEPENGVFRMLRSDVTRFLTTILIGTTVVNIAATALVTKAATAIFGEAGVSAATGVMTVAILLLTEITPKSVAVHNAQEVARIVVRPVAWLSLILYPVGRVVTYLSMGILKILGLKGRSEPYVTEDELKLMLRGAELSGAIEEEEQDMIENVLEIKDTHVREVMTPLVDVVAIDGSGSLVDFHNFWVTHQYSRVPVFEQRIDNIVGIAYAMDLLDYVPKGKLLESTTVVDMAHKPAFFVPDSMSVWNLLREFRIRKVHMAVVLNEYGGTIGIVTLEDVVEEIVGEIFDENDSKEEIQKKTGYIVMRAEGIYDVDANTSIDQLSEELNIKMAEGHQYETVSGFVCEAFGYIPKTGESVTVVLEKENWEENDEQDEGKHERQDQKEKHQIYRLEILAGNARKVSAVRFERVSDMDQVSEARDVKNMVPKFVRKWSSEEDSDGNLQAKNAVFDEHLIAETESMKKE.

Residues 1–72 (MELDLSVLGR…DFSHRCQFVV (72 aa)) constitute a chloroplast transit peptide. Transmembrane regions (helical) follow at residues 103 to 123 (GIVLGAVVCGVLFYGCGKVLA), 157 to 177 (GLILAVLLGLSAFFSMAETSI), 208 to 228 (FLTTILIGTTVVNIAATALVT), 234 to 254 (IFGEAGVSAATGVMTVAILLL), and 280 to 300 (WLSLILYPVGRVVTYLSMGIL). The CNNM transmembrane domain maps to 149–335 (VLKVLREQGL…ELSGAIEEEE (187 aa)). 2 consecutive CBS domains span residues 354-415 (MTPL…LLES) and 421-479 (MAHK…IFDE).

It localises to the plastid. The protein resides in the chloroplast membrane. This Arabidopsis thaliana (Mouse-ear cress) protein is DUF21 domain-containing protein At1g55930, chloroplastic (CBSDUFCH2).